Reading from the N-terminus, the 211-residue chain is LexA repressor (211 aa).

The H-T-H motif DNA-binding region spans 27-47 (QTEIARAFGFKGVRAVQHHLD). Residues Ser-131 and Lys-168 each act as for autocatalytic cleavage activity in the active site.

The protein belongs to the peptidase S24 family. As to quaternary structure, homodimer.

It catalyses the reaction Hydrolysis of Ala-|-Gly bond in repressor LexA.. Functionally, represses a number of genes involved in the response to DNA damage (SOS response), including recA and lexA. In the presence of single-stranded DNA, RecA interacts with LexA causing an autocatalytic cleavage which disrupts the DNA-binding part of LexA, leading to derepression of the SOS regulon and eventually DNA repair. This chain is LexA repressor, found in Xylella fastidiosa (strain 9a5c).